Reading from the N-terminus, the 263-residue chain is Apolipoprotein A-I (263 aa).

The signal sequence occupies residues 1 to 18 (MKAVVLAVAVLFLTGSQA). 2 consecutive repeat copies span residues 66–87 (LKLL…SELG) and 88–109 (PVTQ…QEMN). The segment at 66–263 (LKLLDNWDTL…DEVSKKLSAQ (198 aa)) is 10 X approximate tandem repeats. Position 108 is a methionine sulfoxide (Met-108). The 3; half-length repeat unit spans residues 110-120 (KDLVEVKEKVQ). Repeat copies occupy residues 121–142 (PYLK…KKVE), 143–164 (PLGT…EKLT), 165–186 (PLGE…AQLG), 187–206 (PYSD…LKDS), and 207–228 (ASLA…EKAK). The 9; half-length repeat unit spans residues 229 to 239 (PALEDLRLGLL). Residues 240-263 (PVLESLKASFLSSIDEVSKKLSAQ) form repeat 10.

The protein belongs to the apolipoprotein A1/A4/E family. As to quaternary structure, homodimer. Interacts with APOA1BP and CLU. Component of a sperm activating protein complex (SPAP), consisting of APOA1, an immunoglobulin heavy chain, an immunoglobulin light chain and albumin. Interacts with NDRG1. Interacts with SCGB3A2. Interacts with NAXE and YJEFN3. In terms of processing, glycosylated. Post-translationally, palmitoylated. Phosphorylation sites are present in the extracellular medium.

It is found in the secreted. In terms of biological role, participates in the reverse transport of cholesterol from tissues to the liver for excretion by promoting cholesterol efflux from tissues and by acting as a cofactor for the lecithin cholesterol acyltransferase (LCAT). As part of the SPAP complex, activates spermatozoa motility. This Octodon degus (Degu) protein is Apolipoprotein A-I (APOA1).